A 418-amino-acid chain; its full sequence is Gamma-glutamyl phosphate reductase (418 aa).

Belongs to the gamma-glutamyl phosphate reductase family.

Its subcellular location is the cytoplasm. The enzyme catalyses L-glutamate 5-semialdehyde + phosphate + NADP(+) = L-glutamyl 5-phosphate + NADPH + H(+). It participates in amino-acid biosynthesis; L-proline biosynthesis; L-glutamate 5-semialdehyde from L-glutamate: step 2/2. In terms of biological role, catalyzes the NADPH-dependent reduction of L-glutamate 5-phosphate into L-glutamate 5-semialdehyde and phosphate. The product spontaneously undergoes cyclization to form 1-pyrroline-5-carboxylate. The polypeptide is Gamma-glutamyl phosphate reductase (Chlorobium chlorochromatii (strain CaD3)).